A 378-amino-acid polypeptide reads, in one-letter code: Cytochrome b (378 aa).

4 helical membrane-spanning segments follow: residues 34–54 (FGSL…FLAM), 78–99 (WLLR…YLHV), 114–134 (WLIG…GYVL), and 179–199 (FFTF…IHLL). Heme b is bound by residues His-84 and His-98. Heme b contacts are provided by His-183 and His-197. His-202 lines the a ubiquinone pocket. The next 4 membrane-spanning stretches (helical) occupy residues 227-247 (FKDI…VLIS), 289-309 (LGGV…PFYN), 321-341 (INQV…WIGA), and 348-368 (YVLI…VNPL).

It belongs to the cytochrome b family. In terms of assembly, the main subunits of complex b-c1 are: cytochrome b, cytochrome c1 and the Rieske protein. Heme b is required as a cofactor.

It localises to the mitochondrion inner membrane. Component of the ubiquinol-cytochrome c reductase complex (complex III or cytochrome b-c1 complex) that is part of the mitochondrial respiratory chain. The b-c1 complex mediates electron transfer from ubiquinol to cytochrome c. Contributes to the generation of a proton gradient across the mitochondrial membrane that is then used for ATP synthesis. The sequence is that of Cytochrome b (mt:Cyt-b) from Drosophila mauritiana (Fruit fly).